A 101-amino-acid polypeptide reads, in one-letter code: Urease subunit beta (101 aa).

The protein belongs to the urease beta subunit family. In terms of assembly, heterotrimer of UreA (gamma), UreB (beta) and UreC (alpha) subunits. Three heterotrimers associate to form the active enzyme.

It localises to the cytoplasm. The enzyme catalyses urea + 2 H2O + H(+) = hydrogencarbonate + 2 NH4(+). The protein operates within nitrogen metabolism; urea degradation; CO(2) and NH(3) from urea (urease route): step 1/1. The protein is Urease subunit beta of Bradyrhizobium sp. (strain ORS 278).